Here is a 354-residue protein sequence, read N- to C-terminus: Photosystem II protein D1 (354 aa).

The residue at position 2 (Thr2) is an N-acetylthreonine. Residue Thr2 is modified to Phosphothreonine. The next 3 membrane-spanning stretches (helical) occupy residues 29-46 (YIGWFGVLMIPTLLTATS), 118-133 (HFLLGVACYMGREWEL), and 142-156 (WIAVAYSAPVAAATA). His118 contributes to the chlorophyll a binding site. Tyr126 contacts pheophytin a. 2 residues coordinate [CaMn4O5] cluster: Asp170 and Glu189. Residues 197–218 (FHMLGVAGVFGGSLFSAMHGSL) traverse the membrane as a helical segment. Residue His198 coordinates chlorophyll a. A quinone contacts are provided by residues His215 and 264-265 (SF). His215 is a binding site for Fe cation. His272 provides a ligand contact to Fe cation. The chain crosses the membrane as a helical span at residues 274–288 (FLAAWPVVGIWFTAL). Residues His332, Glu333, Asp342, and Ala344 each coordinate [CaMn4O5] cluster. Positions 345–354 (ASIEAPSLNG) are excised as a propeptide.

The protein belongs to the reaction center PufL/M/PsbA/D family. As to quaternary structure, PSII is composed of 1 copy each of membrane proteins PsbA, PsbB, PsbC, PsbD, PsbE, PsbF, PsbH, PsbI, PsbJ, PsbK, PsbL, PsbM, PsbT, PsbX, PsbY, PsbZ, Psb30/Ycf12, at least 3 peripheral proteins of the oxygen-evolving complex and a large number of cofactors. It forms dimeric complexes. It depends on The D1/D2 heterodimer binds P680, chlorophylls that are the primary electron donor of PSII, and subsequent electron acceptors. It shares a non-heme iron and each subunit binds pheophytin, quinone, additional chlorophylls, carotenoids and lipids. D1 provides most of the ligands for the Mn4-Ca-O5 cluster of the oxygen-evolving complex (OEC). There is also a Cl(-1) ion associated with D1 and D2, which is required for oxygen evolution. The PSII complex binds additional chlorophylls, carotenoids and specific lipids. as a cofactor. In terms of processing, tyr-161 forms a radical intermediate that is referred to as redox-active TyrZ, YZ or Y-Z. Post-translationally, C-terminally processed by CTPA; processing is essential to allow assembly of the oxygen-evolving complex and thus photosynthetic growth.

The protein resides in the plastid. It localises to the chloroplast thylakoid membrane. The catalysed reaction is 2 a plastoquinone + 4 hnu + 2 H2O = 2 a plastoquinol + O2. In terms of biological role, photosystem II (PSII) is a light-driven water:plastoquinone oxidoreductase that uses light energy to abstract electrons from H(2)O, generating O(2) and a proton gradient subsequently used for ATP formation. It consists of a core antenna complex that captures photons, and an electron transfer chain that converts photonic excitation into a charge separation. The D1/D2 (PsbA/PsbD) reaction center heterodimer binds P680, the primary electron donor of PSII as well as several subsequent electron acceptors. The chain is Photosystem II protein D1 from Selaginella uncinata (Blue spike-moss).